Consider the following 143-residue polypeptide: Sporulation-specific cell division protein SsgB (143 aa).

It belongs to the SsgA family. In terms of assembly, interacts with SsgA. Interacts with FtsZ (via N-terminus).

The protein resides in the cell septum. Functionally, involved in sporulation-specific cell division. Required for early stages of sporulation. Important in the process of growth cessation prior to sporulation-specific cell division. Recruits cell division protein FtsZ to the future septum sites and tethers the contractile ring structure (Z ring) to the cytoplasmic membrane during sporulation. Stimulates polymerization and filament length of FtsZ in vitro. The protein is Sporulation-specific cell division protein SsgB of Frankia casuarinae (strain DSM 45818 / CECT 9043 / HFP020203 / CcI3).